A 1828-amino-acid polypeptide reads, in one-letter code: Separin (1828 aa).

Residues 1647 to 1741 (KEAGSYILNP…SGALYECGSF (95 aa)) enclose the Peptidase C50 domain. The active site involves C1730.

As to quaternary structure, interacts with cut2. Interacts with rad21.

The protein localises to the cytoplasm. The protein resides in the nucleus. The enzyme catalyses All bonds known to be hydrolyzed by this endopeptidase have arginine in P1 and an acidic residue in P4. P6 is often occupied by an acidic residue or by a hydroxy-amino-acid residue, the phosphorylation of which enhances cleavage.. With respect to regulation, it is inactivated via its interaction with cut2, which probably covers its active site. Cut2 degradation at anaphase, liberates it and triggers rad21 cleavage. Caspase-like protease, which plays a central role in the chromosome segregation by cleaving the rad21 subunit of the cohesin complex at the onset of anaphase. During most of the cell cycle, it is inactivated by securin/cut2 protein. It is also required for pointed nuclear formation. The protein is Separin (cut1) of Schizosaccharomyces pombe (strain 972 / ATCC 24843) (Fission yeast).